The chain runs to 922 residues: GPI inositol-deacylase (922 aa).

The Cytoplasmic segment spans residues 1–11; the sequence is MFLHSVNLWNL. The chain crosses the membrane as a helical span at residues 12-32; sequence AFYVFMVFLATLGLWDVFFGF. The Lumenal segment spans residues 33–597; sequence EENKCSMSYM…GQVVRFHGGA (565 aa). The active site involves S174. Residues N363, N402, and N558 are each glycosylated (N-linked (GlcNAc...) asparagine). The helical transmembrane segment at 598–618 threads the bilayer; the sequence is LPAYVVSSILLAYGGQLYSLL. Residues 619 to 641 lie on the Cytoplasmic side of the membrane; the sequence is STGYCLEYSTILDKEAKPYKVDP. Residues 642–662 form a helical membrane-spanning segment; sequence FVIMIKFLLGYKWFKELWDAV. Residues 663–668 lie on the Lumenal side of the membrane; that stretch reads LLPELD. A helical transmembrane segment spans residues 669–689; sequence AIVLTSQSMCFPLVSLILFLF. The Cytoplasmic segment spans residues 690–694; it reads GTCTA. A helical membrane pass occupies residues 695-715; sequence YWSGLLSSTSVQLLSSLWLAL. Topologically, residues 716-733 are lumenal; sequence KRPAELPKDIKVMSPDLP. The chain crosses the membrane as a helical span at residues 734 to 754; that stretch reads VLTVVFLIVSWTTCGALAILL. At 755-817 the chain is on the cytoplasmic side; the sequence is SYLYYVFKVV…DAEDSLRMHS (63 aa). The segment at 776–798 is disordered; it reads NQPVNPKHSRRSEKKSNHHKDSA. Over residues 782–793 the composition is skewed to basic residues; it reads KHSRRSEKKSNH. A helical transmembrane segment spans residues 818 to 838; sequence TVINLLTWVVLLSMPSLIYWL. The Lumenal portion of the chain corresponds to 839 to 894; sequence KNLRYYFKLSPDPCKPLAFLLIPAIAILGNTHTVSVKSSKLLKTVSQFPLPLAVGV. A helical membrane pass occupies residues 895-915; the sequence is IAFGSSHLYRVPCFVIIPLVF. Residues 916 to 922 lie on the Cytoplasmic side of the membrane; sequence HALCNFM.

Belongs to the GPI inositol-deacylase family.

It is found in the endoplasmic reticulum membrane. Functionally, GPI inositol-deacylase that catalyzes the remove of the acyl chain linked to the 2-OH position of inositol ring from the GPI-anchored protein (GPI-AP) in the endoplasmic reticulum. Initiates the post-attachment remodeling phase of GPI-AP biogenesis and participates in endoplasmic reticulum (ER)-to-Golgi transport of GPI-anchored protein. This Mus musculus (Mouse) protein is GPI inositol-deacylase.